We begin with the raw amino-acid sequence, 291 residues long: Protease HtpX homolog (291 aa).

A run of 2 helical transmembrane segments spans residues 4–24 (VILF…TARI) and 38–58 (MGML…ISLL). H144 contributes to the Zn(2+) binding site. E145 is an active-site residue. H148 is a Zn(2+) binding site. The next 2 helical transmembrane spans lie at 159–179 (LIQG…AYAV) and 199–219 (ISSI…VMFF). E224 is a Zn(2+) binding site.

Belongs to the peptidase M48B family. The cofactor is Zn(2+).

It is found in the cell inner membrane. This chain is Protease HtpX homolog, found in Pelodictyon phaeoclathratiforme (strain DSM 5477 / BU-1).